The sequence spans 396 residues: Na(+)/H(+) antiporter NhaA 1 (396 aa).

Helical transmembrane passes span 15 to 35 (AGIF…VGFL), 60 to 80 (LEFW…GLEL), 96 to 116 (FLPS…FAVI), 126 to 146 (GWAI…ALLG), 155 to 175 (IFVL…IALF), 179 to 199 (ALNF…LVMC), 207 to 227 (IPFV…GIHA), 255 to 275 (SLGY…NAGV), 290 to 312 (PLGV…SWFL), 329 to 349 (LYAV…VDNL), and 363 to 383 (LAIL…AKAV).

Belongs to the NhaA Na(+)/H(+) (TC 2.A.33) antiporter family.

Its subcellular location is the cell inner membrane. The enzyme catalyses Na(+)(in) + 2 H(+)(out) = Na(+)(out) + 2 H(+)(in). Na(+)/H(+) antiporter that extrudes sodium in exchange for external protons. The sequence is that of Na(+)/H(+) antiporter NhaA 1 from Campylobacter hominis (strain ATCC BAA-381 / DSM 21671 / CCUG 45161 / LMG 19568 / NCTC 13146 / CH001A).